Here is a 253-residue protein sequence, read N- to C-terminus: Imidazole glycerol phosphate synthase subunit HisF (253 aa).

Residues aspartate 11 and aspartate 130 contribute to the active site.

Belongs to the HisA/HisF family. In terms of assembly, heterodimer of HisH and HisF.

Its subcellular location is the cytoplasm. The catalysed reaction is 5-[(5-phospho-1-deoxy-D-ribulos-1-ylimino)methylamino]-1-(5-phospho-beta-D-ribosyl)imidazole-4-carboxamide + L-glutamine = D-erythro-1-(imidazol-4-yl)glycerol 3-phosphate + 5-amino-1-(5-phospho-beta-D-ribosyl)imidazole-4-carboxamide + L-glutamate + H(+). It functions in the pathway amino-acid biosynthesis; L-histidine biosynthesis; L-histidine from 5-phospho-alpha-D-ribose 1-diphosphate: step 5/9. Its function is as follows. IGPS catalyzes the conversion of PRFAR and glutamine to IGP, AICAR and glutamate. The HisF subunit catalyzes the cyclization activity that produces IGP and AICAR from PRFAR using the ammonia provided by the HisH subunit. The polypeptide is Imidazole glycerol phosphate synthase subunit HisF (Methylibium petroleiphilum (strain ATCC BAA-1232 / LMG 22953 / PM1)).